An 846-amino-acid chain; its full sequence is Vacuolar-sorting protein BRO1 (846 aa).

Residues 5-403 (SLSNLMLAIH…ERLQQASELT (399 aa)) enclose the BRO1 domain. Residues 565 to 592 (LKQSLRQLENLGAQRAGLEDMLKEMKRK) adopt a coiled-coil conformation. Positions 726–846 (SFQDHRSSGP…PHQGGGYYRQ (121 aa)) are disordered. Composition is skewed to low complexity over residues 763 to 780 (APYY…YSIP) and 790 to 823 (TPHG…QGQQ). Over residues 824–836 (PRPPYPGQSPYQP) the composition is skewed to pro residues.

As to quaternary structure, homodimer. Interacts with AMSH3. Interacts with VPS32.1/SNF7B and VPS32.2/SNF7A. Interacts with ELC/VPS23A.

It localises to the cytoplasm. The protein localises to the late endosome. Its subcellular location is the endosome. It is found in the multivesicular body. In terms of biological role, class E VPS protein involved in concentration and sorting of cargo proteins of the multivesicular body (MVB) for incorporation into intralumenal vesicles. Fusion between endosomes and the vacuole will then target the cargo proteins to the vacuolar lumen. Associates with FREE1 and ELC to perform function in the ESCRT-I complex. Binds ubiquitin in vitro. Plays a role in the biogenesis of vacuole and multivesicular bodies (MVBs). Required for the endosomal location of AMSH3. Mediates high-affinity phosphate transporter trafficking to maintain phosphate homeostasis. Regulates vacuolar degradation of PHT1-1. The protein is Vacuolar-sorting protein BRO1 of Arabidopsis thaliana (Mouse-ear cress).